A 43-amino-acid polypeptide reads, in one-letter code: Protein PsbN (43 aa).

A helical membrane pass occupies residues 7–29 (VTIFLSGLLVSFTGYALYTAFGQ).

The protein belongs to the PsbN family.

It is found in the plastid. The protein localises to the chloroplast thylakoid membrane. May play a role in photosystem I and II biogenesis. This chain is Protein PsbN, found in Ipomoea purpurea (Common morning glory).